We begin with the raw amino-acid sequence, 169 residues long: Small ribosomal subunit protein bS16 (169 aa).

A disordered region spans residues 114 to 169 (AEGPTAEAITEKRRKAKEEAEAKAAAEAEAAEKAEAEAAEKAAAEAAEESEEASAE). A compositionally biased stretch (basic and acidic residues) spans 129 to 156 (AKEEAEAKAAAEAEAAEKAEAEAAEKAA). Positions 159–169 (AAEESEEASAE) are enriched in acidic residues.

The protein belongs to the bacterial ribosomal protein bS16 family.

The protein is Small ribosomal subunit protein bS16 of Corynebacterium urealyticum (strain ATCC 43042 / DSM 7109).